The following is a 142-amino-acid chain: Large ribosomal subunit protein uL13 (142 aa).

It belongs to the universal ribosomal protein uL13 family. As to quaternary structure, part of the 50S ribosomal subunit.

This protein is one of the early assembly proteins of the 50S ribosomal subunit, although it is not seen to bind rRNA by itself. It is important during the early stages of 50S assembly. This chain is Large ribosomal subunit protein uL13, found in Methylococcus capsulatus (strain ATCC 33009 / NCIMB 11132 / Bath).